Consider the following 188-residue polypeptide: Peroxiredoxin y4vD (188 aa).

The Thioredoxin domain occupies 2-152 (PVKKRVPFVA…VEQWFEEEGF (151 aa)). The Cysteine sulfenic acid (-SOH) intermediate (for peroxiredoxin activity) role is filled by Cys56.

This sequence belongs to the peroxiredoxin family. Prx5 subfamily. Monomer.

The catalysed reaction is a hydroperoxide + 2 glutathione = an alcohol + glutathione disulfide + H2O. Thiol-specific peroxidase that catalyzes the reduction of hydrogen peroxide and organic hydroperoxides to water and alcohols, respectively. Plays a role in cell protection against oxidative stress by detoxifying peroxides. This chain is Peroxiredoxin y4vD, found in Sinorhizobium fredii (strain NBRC 101917 / NGR234).